The chain runs to 279 residues: Four and a half LIM domains protein 2 (279 aa).

A C4-type zinc finger spans residues 7–31 (CHHCNESLFGKKYILREESPYCVVC). 3 consecutive LIM zinc-binding domains span residues 40 to 92 (CEEC…CTDC), 101 to 153 (CQEC…CVPC), and 162 to 212 (CVQC…CLNC). Lys78 participates in a covalent cross-link: Glycyl lysine isopeptide (Lys-Gly) (interchain with G-Cter in SUMO2). Residues Lys167 and Lys220 each participate in a glycyl lysine isopeptide (Lys-Gly) (interchain with G-Cter in SUMO2) cross-link. An LIM zinc-binding 4 domain is found at 221–275 (CAGCTNPISGLGGTKYISFEERQWHNDCFNCKKCSLSLVGRGFLTERDDILCPDC). Ser238 is subject to Phosphoserine.

Interacts with ZNF638 and TTN/titin. Interacts with E4F1. Interacts with GRB7. Interacts with SIRT1 and FOXO1. Interacts with CEFIP. Interacts with calcineurin. Interacts with FOXK1. In terms of tissue distribution, expressed in skeletal muscle and heart.

The protein localises to the cytoplasm. It localises to the nucleus. It is found in the myofibril. The protein resides in the sarcomere. Its subcellular location is the z line. Functionally, may function as a molecular transmitter linking various signaling pathways to transcriptional regulation. Negatively regulates the transcriptional repressor E4F1 and may function in cell growth. Inhibits the transcriptional activity of FOXO1 and its apoptotic function by enhancing the interaction of FOXO1 with SIRT1 and FOXO1 deacetylation. Negatively regulates the calcineurin/NFAT signaling pathway in cardiomyocytes. The sequence is that of Four and a half LIM domains protein 2 (FHL2) from Homo sapiens (Human).